Consider the following 270-residue polypeptide: Type III pantothenate kinase (270 aa).

Residue 6 to 13 (DVRNTHTV) coordinates ATP. Position 109 to 112 (109 to 112 (GADR)) interacts with substrate. Catalysis depends on Asp111, which acts as the Proton acceptor. K(+) is bound at residue Asp131. Ser134 provides a ligand contact to ATP. Thr186 contributes to the substrate binding site.

It belongs to the type III pantothenate kinase family. As to quaternary structure, homodimer. It depends on NH4(+) as a cofactor. The cofactor is K(+).

Its subcellular location is the cytoplasm. The catalysed reaction is (R)-pantothenate + ATP = (R)-4'-phosphopantothenate + ADP + H(+). Its pathway is cofactor biosynthesis; coenzyme A biosynthesis; CoA from (R)-pantothenate: step 1/5. Functionally, catalyzes the phosphorylation of pantothenate (Pan), the first step in CoA biosynthesis. In Mycolicibacterium gilvum (strain PYR-GCK) (Mycobacterium gilvum (strain PYR-GCK)), this protein is Type III pantothenate kinase.